The chain runs to 426 residues: Glutamate-1-semialdehyde 2,1-aminomutase (426 aa).

The residue at position 265 (Lys-265) is an N6-(pyridoxal phosphate)lysine.

Belongs to the class-III pyridoxal-phosphate-dependent aminotransferase family. HemL subfamily. Homodimer. Pyridoxal 5'-phosphate serves as cofactor.

It localises to the cytoplasm. The enzyme catalyses (S)-4-amino-5-oxopentanoate = 5-aminolevulinate. It participates in porphyrin-containing compound metabolism; protoporphyrin-IX biosynthesis; 5-aminolevulinate from L-glutamyl-tRNA(Glu): step 2/2. The polypeptide is Glutamate-1-semialdehyde 2,1-aminomutase (Salmonella typhi).